The primary structure comprises 496 residues: Apulose kinase (496 aa).

ATP-binding positions include 13 to 15 (TTN), Thr-267, Gly-308, and 408 to 412 (GATQN).

It belongs to the FGGY kinase family.

It carries out the reaction apulose + ATP = apulose 4-phosphate + ADP + H(+). The protein operates within carbohydrate metabolism. Functionally, involved in catabolism of D-apiose. Catalyzes phosphorylation of apulose to form apulose 4-phosphate. The chain is Apulose kinase from Pectobacterium atrosepticum (strain SCRI 1043 / ATCC BAA-672) (Erwinia carotovora subsp. atroseptica).